We begin with the raw amino-acid sequence, 281 residues long: Pantothenate synthetase (281 aa).

Residue 30-37 (MGYLHDGH) coordinates ATP. The Proton donor role is filled by His-37. Gln-61 lines the (R)-pantoate pocket. Residue Gln-61 coordinates beta-alanine. Residue 147 to 150 (GEKD) coordinates ATP. Gln-153 contributes to the (R)-pantoate binding site. ATP contacts are provided by residues Ile-176 and 184 to 187 (KSSR).

The protein belongs to the pantothenate synthetase family. In terms of assembly, homodimer.

Its subcellular location is the cytoplasm. The enzyme catalyses (R)-pantoate + beta-alanine + ATP = (R)-pantothenate + AMP + diphosphate + H(+). It participates in cofactor biosynthesis; (R)-pantothenate biosynthesis; (R)-pantothenate from (R)-pantoate and beta-alanine: step 1/1. In terms of biological role, catalyzes the condensation of pantoate with beta-alanine in an ATP-dependent reaction via a pantoyl-adenylate intermediate. The sequence is that of Pantothenate synthetase from Clostridium acetobutylicum (strain ATCC 824 / DSM 792 / JCM 1419 / IAM 19013 / LMG 5710 / NBRC 13948 / NRRL B-527 / VKM B-1787 / 2291 / W).